A 140-amino-acid polypeptide reads, in one-letter code: Nucleoside diphosphate kinase (140 aa).

Positions 11, 59, 87, 93, 104, and 114 each coordinate ATP. The active-site Pros-phosphohistidine intermediate is H117.

Belongs to the NDK family. In terms of assembly, homotetramer. Requires Mg(2+) as cofactor.

The protein resides in the cytoplasm. The catalysed reaction is a 2'-deoxyribonucleoside 5'-diphosphate + ATP = a 2'-deoxyribonucleoside 5'-triphosphate + ADP. It catalyses the reaction a ribonucleoside 5'-diphosphate + ATP = a ribonucleoside 5'-triphosphate + ADP. Major role in the synthesis of nucleoside triphosphates other than ATP. The ATP gamma phosphate is transferred to the NDP beta phosphate via a ping-pong mechanism, using a phosphorylated active-site intermediate. This Rhodovulum sulfidophilum (Rhodobacter sulfidophilus) protein is Nucleoside diphosphate kinase.